Here is a 630-residue protein sequence, read N- to C-terminus: Beta-phellandrene synthase, chloroplastic (630 aa).

Residues 1–48 (MALVSSAPKSCLHKSLIRSTHHELKPLRRTIPTLGMCRRGKSFTPSVS) constitute a chloroplast transit peptide. Residues D381, D385, and D533 each contribute to the Mg(2+) site. Positions 381 to 385 (DDIYD) match the DDXXD motif motif.

It belongs to the terpene synthase family. Tpsd subfamily. Requires Mg(2+) as cofactor. Mn(2+) serves as cofactor. K(+) is required as a cofactor.

Its subcellular location is the plastid. The protein resides in the chloroplast. It carries out the reaction (2E)-geranyl diphosphate = (-)-beta-phellandrene + diphosphate. The protein operates within terpene metabolism; oleoresin biosynthesis. Functionally, converts geranyl diphosphate to four products with (-)-(4S)-beta-phellandrene (52%) as the major olefin, and lesser amounts of (-)-(1S,5S)-beta-pinene (34%), (-)-1S,5S-alpha-pinene (8.5%), and (-)-(4S)-limonene (6%). Involved in defensive oleoresin formation in conifers in response to insect attack or other injury. Involved in monoterpene (C10) olefins biosynthesis. The chain is Beta-phellandrene synthase, chloroplastic (ag8) from Abies grandis (Grand fir).